Here is a 220-residue protein sequence, read N- to C-terminus: DNA replication complex GINS protein SLD5 (220 aa).

The protein belongs to the GINS4/SLD5 family. As to quaternary structure, component of the GINS complex. Interacts with EOL1 in the nucleus.

It localises to the nucleus. Functionally, the GINS complex plays an essential role in the initiation of DNA replication. Required during embryogenesis. The polypeptide is DNA replication complex GINS protein SLD5 (Arabidopsis thaliana (Mouse-ear cress)).